A 355-amino-acid chain; its full sequence is Elongation factor Ts (355 aa).

Positions 82–85 are involved in Mg(2+) ion dislocation from EF-Tu; it reads TDFV.

Belongs to the EF-Ts family.

It localises to the cytoplasm. Functionally, associates with the EF-Tu.GDP complex and induces the exchange of GDP to GTP. It remains bound to the aminoacyl-tRNA.EF-Tu.GTP complex up to the GTP hydrolysis stage on the ribosome. The protein is Elongation factor Ts of Helicobacter pylori (strain Shi470).